The chain runs to 1314 residues: Enfumafungin synthase efuA (1314 aa).

Residues 1-680 (MPSYHNTDKT…RYIDKASRQG (680 aa)) form a terpenne cyclase region. 2 PFTB repeats span residues 19–62 (LQQA…ELSL) and 66–107 (GPEI…RILG). 3 helical membrane passes run 133-153 (FFTR…IPQM), 155-175 (AELI…SSWA), and 230-250 (YQWI…FGGL). One copy of the PFTB 3 repeat lies at 260–300 (LKRCTAWLLEHQEESGDWAGFFPPIHGSIWALLLDGFSFQS). Asp-395 (proton donor) is an active-site residue. PFTB repeat units follow at residues 417–458 (VMNG…DSLV) and 546–597 (CMRT…LRFR). Positions 681–1314 (IETLRIPSSS…ADSVLDIEEK (634 aa)) are glycosyltransferase. A helical membrane pass occupies residues 1200–1220 (AIVQLLYGFTTTILALFGWLK). A disordered region spans residues 1289–1314 (DSGASESSRSSLDGGHADSVLDIEEK). The segment covering 1292 to 1302 (ASESSRSSLDG) has biased composition (low complexity).

This sequence in the N-terminal section; belongs to the terpene cyclase/mutase family. In the C-terminal section; belongs to the glycosyltransferase 28 family.

The protein resides in the membrane. It functions in the pathway secondary metabolite biosynthesis; terpenoid biosynthesis. Its function is as follows. Terpene cyclase-glycosyl transferase fusion protein; part of the gene cluster that mediates the biosynthesis of enfumafungin, a glycosylated fernene-type triterpenoid with potent antifungal activity, mediated by its interaction with beta-1,3-glucan synthase and the fungal cell wall. The pathway begins with the terpene cyclase-glycosyl transferase fusion protein that most likely uses 2,3-oxidosqualene as substrate and catalyzes glycosylation immediately after cyclization. The fernene glycoside then could be processed by the desaturase efuI which catalyzes isomerization of a double bond established by efuA to form the core structure. The latter would then undergo a series of hydroxylations in unknown order at C-2, C-19, C-23 and C-25, which would be catalyzed by two of the three cytochrome P450 monooxygenases efuB, efuG or efuH. The hydroxy-group at C-25 becomes oxidized by the dehydrogenase efuE to enable a spontaneous, non-enzymatic hemiacetal formation with C-23. After hydroxylation at C-2, acetylation by the acetyltransferase efuC takes place. The final steps in enfumafungin biosynthesis require expansion of the 5-membered ring by lactonization via a Baeyer-Villiger reaction mediated by one of the BGC's cytochrome P450 monooxygenases (efuB, efuG or efuH) followed by ring cleavage. This type of reaction would establish a double bond between C-20 and C-21 which could be reduced by the reductase efuL to form the final product. The protein is Enfumafungin synthase efuA of Hormonema carpetanum.